A 211-amino-acid chain; its full sequence is Endonuclease III (211 aa).

Positions Arg108–Asn127 constitute a HhH domain. [4Fe-4S] cluster is bound by residues Cys187, Cys194, Cys197, and Cys203.

The protein belongs to the Nth/MutY family. Requires [4Fe-4S] cluster as cofactor.

The catalysed reaction is 2'-deoxyribonucleotide-(2'-deoxyribose 5'-phosphate)-2'-deoxyribonucleotide-DNA = a 3'-end 2'-deoxyribonucleotide-(2,3-dehydro-2,3-deoxyribose 5'-phosphate)-DNA + a 5'-end 5'-phospho-2'-deoxyribonucleoside-DNA + H(+). DNA repair enzyme that has both DNA N-glycosylase activity and AP-lyase activity. The DNA N-glycosylase activity releases various damaged pyrimidines from DNA by cleaving the N-glycosidic bond, leaving an AP (apurinic/apyrimidinic) site. The AP-lyase activity cleaves the phosphodiester bond 3' to the AP site by a beta-elimination, leaving a 3'-terminal unsaturated sugar and a product with a terminal 5'-phosphate. This Escherichia coli O6:H1 (strain CFT073 / ATCC 700928 / UPEC) protein is Endonuclease III.